The primary structure comprises 206 residues: Small ribosomal subunit protein uS2 (206 aa).

The protein belongs to the universal ribosomal protein uS2 family.

This chain is Small ribosomal subunit protein uS2, found in Methanothrix thermoacetophila (strain DSM 6194 / JCM 14653 / NBRC 101360 / PT) (Methanosaeta thermophila).